A 427-amino-acid polypeptide reads, in one-letter code: Histidine--tRNA ligase (427 aa).

The protein belongs to the class-II aminoacyl-tRNA synthetase family. As to quaternary structure, homodimer.

It localises to the cytoplasm. It carries out the reaction tRNA(His) + L-histidine + ATP = L-histidyl-tRNA(His) + AMP + diphosphate + H(+). This Alteromonas mediterranea (strain DSM 17117 / CIP 110805 / LMG 28347 / Deep ecotype) protein is Histidine--tRNA ligase.